Consider the following 538-residue polypeptide: Putative outer membrane porin BglH (538 aa).

The signal sequence occupies residues 1–25; sequence MFRQNLITSAILLMAPLAFSAQSLA. Residues 52–82 form a disordered region; that stretch reads KDEEKKKYTPATVNRSVSTNDQGYAANPFPT. The segment covering 62-73 has biased composition (polar residues); that stretch reads ATVNRSVSTNDQ.

Belongs to the porin LamB (TC 1.B.3) family.

Its subcellular location is the cell outer membrane. May be a sugar porin with a broad carbohydrate specificity. The polypeptide is Putative outer membrane porin BglH (bglH) (Shigella flexneri).